Consider the following 518-residue polypeptide: Glucose-1-phosphate adenylyltransferase large subunit 2, cytosolic (518 aa).

It belongs to the bacterial/plant glucose-1-phosphate adenylyltransferase family. In terms of assembly, heterotetramer composed of two small and two large subunits.

It is found in the cytoplasm. The protein localises to the cytosol. It carries out the reaction alpha-D-glucose 1-phosphate + ATP + H(+) = ADP-alpha-D-glucose + diphosphate. Its pathway is glycan biosynthesis; starch biosynthesis. Activated by 3'phosphoglycerate, inhibited by orthophosphate. Allosteric regulation. Inhibited by inorganic phosphate (Pi). In terms of biological role, involved in synthesis of starch. Catalyzes the synthesis of ADP-glucose, a molecule that serves as an activated glycosyl donor for alpha-1,4-glucan synthesis. Essential for starch synthesis in seed endosperm. Is essential for both catalytic and allosteric regulatory properties of the cytosolic heterotetramer enzyme. The polypeptide is Glucose-1-phosphate adenylyltransferase large subunit 2, cytosolic (Oryza sativa subsp. japonica (Rice)).